The following is a 202-amino-acid chain: Type II restriction enzyme MunI (202 aa).

In terms of assembly, homodimer.

The catalysed reaction is Endonucleolytic cleavage of DNA to give specific double-stranded fragments with terminal 5'-phosphates.. Its function is as follows. A P subtype restriction enzyme that recognizes the double-stranded sequence 5'-CAATTG-3' and cleaves after C-1. The chain is Type II restriction enzyme MunI from Mycoplasma sp.